The primary structure comprises 275 residues: Transmembrane protein 202 (275 aa).

4 helical membrane passes run 60–80 (SGFSVLLLACTSPLNLVQFLV), 116–136 (ALFLISILFMLISLGLLLSSC), 151–171 (VSMLSFCSAVSLLLCLNLFLA), and 193–213 (WCSEVLYICVGIISFLNFITF).

The protein localises to the membrane. The polypeptide is Transmembrane protein 202 (Tmem202) (Mus musculus (Mouse)).